Reading from the N-terminus, the 156-residue chain is MKLALVAVGQRLPAWAETACEDYLKRFPADWRVELKAVKAEPRTQGKTVDAMKAAEAQRIEAACARGVRRVVLDERGTRLTTQQLAQRLQAWQLDGRDVALLIGGPDGLADTLKDGADETLRLSDLTLPHAFARVLLAEALYRAWSVNAGHPYHRE.

Residues Leu-73, Gly-104, and 123 to 128 (LSDLTL) contribute to the S-adenosyl-L-methionine site.

Belongs to the RNA methyltransferase RlmH family. Homodimer.

It is found in the cytoplasm. The catalysed reaction is pseudouridine(1915) in 23S rRNA + S-adenosyl-L-methionine = N(3)-methylpseudouridine(1915) in 23S rRNA + S-adenosyl-L-homocysteine + H(+). Specifically methylates the pseudouridine at position 1915 (m3Psi1915) in 23S rRNA. In Methylibium petroleiphilum (strain ATCC BAA-1232 / LMG 22953 / PM1), this protein is Ribosomal RNA large subunit methyltransferase H.